We begin with the raw amino-acid sequence, 108 residues long: Urease subunit gamma (108 aa).

It belongs to the urease gamma subunit family. Heterotrimer of UreA (gamma), UreB (beta) and UreC (alpha) subunits. Three heterotrimers associate to form the active enzyme.

The protein resides in the cytoplasm. It catalyses the reaction urea + 2 H2O + H(+) = hydrogencarbonate + 2 NH4(+). It functions in the pathway nitrogen metabolism; urea degradation; CO(2) and NH(3) from urea (urease route): step 1/1. In Haloquadratum walsbyi (strain DSM 16790 / HBSQ001), this protein is Urease subunit gamma.